A 233-amino-acid chain; its full sequence is Small ribosomal subunit protein uS3 (233 aa).

Residues 39 to 107 form the KH type-2 domain; that stretch reads VREFLKKRLG…PVHVNIEEVR (69 aa). The interval 212–233 is disordered; sequence VQATPAAPEKKMRKGARNAAAN.

It belongs to the universal ribosomal protein uS3 family. In terms of assembly, part of the 30S ribosomal subunit. Forms a tight complex with proteins S10 and S14.

Its function is as follows. Binds the lower part of the 30S subunit head. Binds mRNA in the 70S ribosome, positioning it for translation. The sequence is that of Small ribosomal subunit protein uS3 from Chromobacterium violaceum (strain ATCC 12472 / DSM 30191 / JCM 1249 / CCUG 213 / NBRC 12614 / NCIMB 9131 / NCTC 9757 / MK).